The primary structure comprises 407 residues: Peptidase T (407 aa).

Position 82 (His-82) interacts with Zn(2+). The active site involves Asp-84. Asp-143 provides a ligand contact to Zn(2+). Glu-177 (proton acceptor) is an active-site residue. Zn(2+) is bound by residues Glu-178, Asp-200, and His-382.

The protein belongs to the peptidase M20B family. Requires Zn(2+) as cofactor.

The protein resides in the cytoplasm. It catalyses the reaction Release of the N-terminal residue from a tripeptide.. Its function is as follows. Cleaves the N-terminal amino acid of tripeptides. The protein is Peptidase T of Streptococcus uberis (strain ATCC BAA-854 / 0140J).